The primary structure comprises 488 residues: Acetyl-coenzyme A carboxylase carboxyl transferase subunit beta, chloroplastic (488 aa).

The region spanning 224 to 488 (LWIQCDNCYG…FFPLNKNEIK (265 aa)) is the CoA carboxyltransferase N-terminal domain. Residues C228, C231, C244, and C247 each contribute to the Zn(2+) site. The segment at 228–247 (CDNCYGLMYKKVEMNVCEEC) adopts a C4-type zinc-finger fold.

The protein belongs to the AccD/PCCB family. In terms of assembly, acetyl-CoA carboxylase is a heterohexamer composed of biotin carboxyl carrier protein, biotin carboxylase and 2 subunits each of ACCase subunit alpha and ACCase plastid-coded subunit beta (accD). Zn(2+) is required as a cofactor.

The protein localises to the plastid. It localises to the chloroplast stroma. The catalysed reaction is N(6)-carboxybiotinyl-L-lysyl-[protein] + acetyl-CoA = N(6)-biotinyl-L-lysyl-[protein] + malonyl-CoA. The protein operates within lipid metabolism; malonyl-CoA biosynthesis; malonyl-CoA from acetyl-CoA: step 1/1. Functionally, component of the acetyl coenzyme A carboxylase (ACC) complex. Biotin carboxylase (BC) catalyzes the carboxylation of biotin on its carrier protein (BCCP) and then the CO(2) group is transferred by the transcarboxylase to acetyl-CoA to form malonyl-CoA. The sequence is that of Acetyl-coenzyme A carboxylase carboxyl transferase subunit beta, chloroplastic from Arabis hirsuta (Hairy rock-cress).